Reading from the N-terminus, the 215-residue chain is Proteasome subunit beta inpE (215 aa).

Belongs to the peptidase T1B family.

The protein localises to the cytoplasm. The protein resides in the nucleus. The enzyme catalyses Cleavage of peptide bonds with very broad specificity.. Its function is as follows. Proteasome subunit beta type-6; part of the inp gene cluster that mediates the biosynthesis of fellutamide B, a mycotoxin that acts as a proteasome inhibitor. In the first step of fellutabmide B biosynthesis inpC activates 3-hydroxydodecanoic acid to generate 3-hydroxydodecanoyl-AMP that is then loaded onto the T0 domain of inpB. The 3-hydroxydodecanoyl-S-phosphopantetheinyl-T0 is sequentially extended with L-Asn and L-Gln by the two CAT modules of inpB. The linear lipodipeptide from inpB is then transferred onto inpA for the addition of the third amino acid, L-Leu. Reductive releasing of the lipotripeptide by the TE domain of inpA produces (2S)-fellutamide B. InpF might be involved in the release and transfer of the lipodipeptide from inpB to inpA. The inp cluster-encoded proteasome subunit inpE confers resistance to internally produced fellutamides. The MFS efflux transporter inpD may contribute to fellutamide resistance as well. The chain is Proteasome subunit beta inpE (inpE) from Emericella nidulans (strain FGSC A4 / ATCC 38163 / CBS 112.46 / NRRL 194 / M139) (Aspergillus nidulans).